The chain runs to 871 residues: Envelope glycoprotein gp160 (871 aa).

A signal peptide spans 1 to 21; the sequence is MKNLIGITLILIITILGIGFS. Residues 22-684 are Extracellular-facing; it reads TYYTTVFYGV…DITQWLWYIK (663 aa). Residues Cys-43 and Cys-63 are joined by a disulfide bond. N-linked (GlcNAc...) asparagine; by host glycosylation is found at Asn-77, Asn-124, Asn-127, Asn-142, Asn-153, Asn-157, Asn-185, Asn-194, Asn-229, Asn-238, Asn-259, Asn-273, Asn-285, Asn-289, Asn-297, Asn-329, Asn-345, Asn-352, Asn-384, Asn-387, Asn-395, Asn-398, Asn-438, Asn-451, and Asn-496. 5 disulfide bridges follow: Cys-108/Cys-202, Cys-115/Cys-193, Cys-120/Cys-154, Cys-215/Cys-244, and Cys-225/Cys-236. Residues 120-153 form a V1 region; sequence CTMTNTTNKTLNSATTTLTPTVNLSSIPNYEVYN. The V2 stretch occupies residues 154–193; that stretch reads CSFNQTTEFRDKKKQIYSLFYREDIVKEDGNNNSYYLHNC. The tract at residues 292-325 is V3; it reads CERTGNNTRGQVQIGPGMTFYNIENVVGDTRKAY. A disulfide bridge connects residues Cys-292 and Cys-326. Disulfide bonds link Cys-376-Cys-435 and Cys-383-Cys-408. The segment at 383-408 is V4; it reads CNLTNWTNTWTANRTNNTHGTLVAPC. Residues 451-458 are V5; it reads NNSYTPQF. The tract at residues 502 to 522 is fusion peptide; the sequence is RDVGIGLLFLGFLSAAGSTMG. Residues 567–583 are immunosuppression; that stretch reads LQARMLAVEKYIRDQQL. N-linked (GlcNAc...) asparagine; by host glycosylation is found at Asn-602, Asn-613, Asn-626, and Asn-638. Residues 645-668 are a coiled coil; the sequence is SLLEKAQTQQEKNKQELLELDKWS. Positions 663-684 are MPER; binding to GalCer; that stretch reads ELDKWSSLWDWFDITQWLWYIK. A helical membrane pass occupies residues 685 to 705; it reads IAIIIVAGLVGLRILMFIVNV. Over 706 to 871 the chain is Cytoplasmic; sequence VKQVRQGYTP…IRQGLELALN (166 aa). The YXXL motif; contains endocytosis signal motif lies at 713–716; the sequence is YTPL.

As to quaternary structure, the mature envelope protein (Env) consists of a homotrimer of non-covalently associated gp120-gp41 heterodimers. The resulting complex protrudes from the virus surface as a spike. Interacts with host CD4 and CCR5. Gp120 also interacts with the C-type lectins CD209/DC-SIGN and CLEC4M/DC-SIGNR (collectively referred to as DC-SIGN(R)). The mature envelope protein (Env) consists of a homotrimer of non-covalently associated gp120-gp41 heterodimers. The resulting complex protrudes from the virus surface as a spike. Specific enzymatic cleavages in vivo yield mature proteins. Envelope glycoproteins are synthesized as an inactive precursor that is heavily N-glycosylated and processed likely by host cell furin in the Golgi to yield the mature SU and TM proteins. The cleavage site between SU and TM requires the minimal sequence [KR]-X-[KR]-R.

Its subcellular location is the virion membrane. It is found in the host cell membrane. The protein localises to the host endosome membrane. Functionally, the surface protein gp120 (SU) attaches the virus to the host lymphoid cell by binding to the primary receptor CD4. This interaction induces a structural rearrangement creating a high affinity binding site for a chemokine coreceptor like CCR5. This peculiar 2 stage receptor-interaction strategy allows gp120 to maintain the highly conserved coreceptor-binding site in a cryptic conformation, protected from neutralizing antibodies. These changes are transmitted to the transmembrane protein gp41 and are thought to activate its fusogenic potential by unmasking its fusion peptide. Surface protein gp120 (SU) may target the virus to gut-associated lymphoid tissue (GALT) by binding host ITGA4/ITGB7 (alpha-4/beta-7 integrins), a complex that mediates T-cell migration to the GALT. Interaction between gp120 and ITGA4/ITGB7 would allow the virus to enter GALT early in the infection, infecting and killing most of GALT's resting CD4+ T-cells. This T-cell depletion is believed to be the major insult to the host immune system leading to AIDS. Its function is as follows. The surface protein gp120 is a ligand for CD209/DC-SIGN and CLEC4M/DC-SIGNR, which are respectively found on dendritic cells (DCs), and on endothelial cells of liver sinusoids and lymph node sinuses. These interactions allow capture of viral particles at mucosal surfaces by these cells and subsequent transmission to permissive cells. DCs are professional antigen presenting cells, critical for host immunity by inducing specific immune responses against a broad variety of pathogens. They act as sentinels in various tissues where they take up antigen, process it, and present it to T-cells following migration to lymphoid organs. SIV subverts the migration properties of dendritic cells to gain access to CD4+ T-cells in lymph nodes. Virus transmission to permissive T-cells occurs either in trans (without DCs infection, through viral capture and transmission), or in cis (following DCs productive infection, through the usual CD4-gp120 interaction), thereby inducing a robust infection. In trans infection, bound virions remain infectious over days and it is proposed that they are not degraded, but protected in non-lysosomal acidic organelles within the DCs close to the cell membrane thus contributing to the viral infectious potential during DCs' migration from the periphery to the lymphoid tissues. On arrival at lymphoid tissues, intact virions recycle back to DCs' cell surface allowing virus transmission to CD4+ T-cells. Virion capture also seems to lead to MHC-II-restricted viral antigen presentation, and probably to the activation of SIV-specific CD4+ cells. In terms of biological role, the transmembrane protein gp41 (TM) acts as a class I viral fusion protein. Under the current model, the protein has at least 3 conformational states: pre-fusion native state, pre-hairpin intermediate state, and post-fusion hairpin state. During fusion of viral and target intracellular membranes, the coiled coil regions (heptad repeats) assume a trimer-of-hairpins structure, positioning the fusion peptide in close proximity to the C-terminal region of the ectodomain. The formation of this structure appears to drive apposition and subsequent fusion of viral and target cell membranes. Complete fusion occurs in host cell endosomes. The virus undergoes clathrin-dependent internalization long before endosomal fusion, thus minimizing the surface exposure of conserved viral epitopes during fusion and reducing the efficacy of inhibitors targeting these epitopes. Membranes fusion leads to delivery of the nucleocapsid into the cytoplasm. Functionally, the envelope glycoprotein gp160 precursor down-modulates cell surface CD4 antigen by interacting with it in the endoplasmic reticulum and blocking its transport to the cell surface. The gp120-gp41 heterodimer allows rapid transcytosis of the virus through CD4 negative cells such as simple epithelial monolayers of the intestinal, rectal and endocervical epithelial barriers. Both gp120 and gp41 specifically recognize glycosphingolipids galactosyl-ceramide (GalCer) or 3' sulfo-galactosyl-ceramide (GalS) present in the lipid rafts structures of epithelial cells. Binding to these alternative receptors allows the rapid transcytosis of the virus through the epithelial cells. This transcytotic vesicle-mediated transport of virions from the apical side to the basolateral side of the epithelial cells does not involve infection of the cells themselves. The protein is Envelope glycoprotein gp160 of Simian immunodeficiency virus (isolate TAN1) (SIV-cpz).